The chain runs to 167 residues: Ribosome rescue factor SmrB (167 aa).

A Smr domain is found at 91–166 (LDLHGLTREQ…GEAAILILVD (76 aa)).

It belongs to the SmrB family. Associates with collided ribosomes, but not with correctly translating polysomes.

In terms of biological role, acts as a ribosome collision sensor. Detects stalled/collided disomes (pairs of ribosomes where the leading ribosome is stalled and a second ribosome has collided with it) and endonucleolytically cleaves mRNA at the 5' boundary of the stalled ribosome. Stalled/collided disomes form a new interface (primarily via the 30S subunits) that binds SmrB. Cleaved mRNA becomes available for tmRNA ligation, leading to ribosomal subunit dissociation and rescue of stalled ribosomes. This is Ribosome rescue factor SmrB from Haemophilus influenzae (strain ATCC 51907 / DSM 11121 / KW20 / Rd).